The sequence spans 582 residues: MESCWLTMESYQAALVVCIVSGLILAVAGYGNVRRLACEFLLKPPKRFRDDICEALLRGPENDQKPVLVDFGWRHGAVRRQMLLASAKASAYSNERHGSKIHISPDDIARGRSFADALDVHRRSGRILFGFFHPFCNAGGGGEKVLWKAVETTLKQSLNNIVVVYTGDCDTTGARILSNVEHRFGSQLDSERIVFIFLRHRKWVESRTWPRMTLLGQALGSIVLSIEAALCCPPDVWCDTMGYPFGYPFVSWLCRIPIITYTHYPVVSIDMLDKLRMMPEFRNSPTLWAKFLYWRIFMRCYTFAGSFVDLAVTNSTWTYNHINAIWSRTGNVSIIYPPCSTENLVIENAHDMWDRKHQAVVIAQFRPEKRHALILRSFSNFVKKTGSNMKLLMLGSTRGQEDRDYVKKLEQLAYSELAIPKESLEFITDCKYEKMKKYLQESSFGINAMWNEHFGIAVVEYAASGLITLAHASAGPLLDIIVPWDIEGDKQLERGSDKNRTGFFFKDRSDPDFCKITAEFPTLEELFVRADQLTDEERLAISQRAKRCVLHKFSDLKFSEDWAQVVDRTIQLLHTLRNDKVE.

The Lumenal portion of the chain corresponds to M1 to Q12. The helical transmembrane segment at A13–V33 threads the bilayer. Topologically, residues R34–T240 are cytoplasmic. An intramembrane region (helical) is located at residues M241–Y261. Residues T262 to Y461 are Cytoplasmic-facing. An intramembrane region (helical) is located at residues A462–V482. The Cytoplasmic segment spans residues P483 to E582.

The protein belongs to the glycosyltransferase group 1 family.

The protein resides in the endoplasmic reticulum membrane. The enzyme catalyses an alpha-D-Man-(1-&gt;3)-[alpha-D-Man-(1-&gt;6)]-beta-D-Man-(1-&gt;4)-beta-D-GlcNAc-(1-&gt;4)-alpha-D-GlcNAc-diphospho-di-trans,poly-cis-dolichol + 2 GDP-alpha-D-mannose = an alpha-D-Man-(1-&gt;2)-alpha-D-Man-(1-&gt;2)-alpha-D-Man-(1-&gt;3)-[alpha-D-Man-(1-&gt;6)]-beta-D-Man-(1-&gt;4)-beta-D-GlcNAc-(1-&gt;4)-alpha-D-GlcNAc-diphospho-di-trans,poly-cis-dolichol + 2 GDP + 2 H(+). It participates in protein modification; protein glycosylation. In terms of biological role, GDP-Man:Man(3)GlcNAc(2)-PP-Dol alpha-1,2-mannosyltransferase that operates in the biosynthetic pathway of dolichol-linked oligosaccharides, the glycan precursors employed in protein asparagine (N)-glycosylation. The assembly of dolichol-linked oligosaccharides begins on the cytosolic side of the endoplasmic reticulum membrane and finishes in its lumen. The sequential addition of sugars to dolichol pyrophosphate produces dolichol-linked oligosaccharides containing fourteen sugars, including two GlcNAcs, nine mannoses and three glucoses. Once assembled, the oligosaccharide is transferred from the lipid to nascent proteins by oligosaccharyltransferases. Catalyzes, on the cytoplasmic face of the endoplasmic reticulum, the addition of the fourth and fifth mannose residues to the dolichol-linked oligosaccharide chain, to produce Man(5)GlcNAc(2)-PP-dolichol core oligosaccharide. In Eremothecium gossypii (strain ATCC 10895 / CBS 109.51 / FGSC 9923 / NRRL Y-1056) (Yeast), this protein is GDP-Man:Man(3)GlcNAc(2)-PP-Dol alpha-1,2-mannosyltransferase (ALG11).